A 662-amino-acid polypeptide reads, in one-letter code: MNFPWDQLLVKGNWMITMAQIGAPFLVIGLIAVITYFKLWKYLYKEWFTSVDHKKIGIMYLICAVLMFVRGGIDALLIRAQLTVPDNKFLESNHYNEIFSTHGVIMIIFMAMPFIFGLWNIVVPLQIGARDVAFPVLNNVSFWLFFAGMILFNLSFIIGGSPAAGWTNYAPLAGEFSPGPGVNYYLIAIQISGLGTLATGINFFVTILRCKTPTMKFMQMPMFTVTTFITTLIVILAFPPLTVALALMTTDRIFDTAFFTVAHGGMPMLWANFFWVWGHPEVYIVILPAFGIYSEIIPTFARKRLFGHQSMVWATAGIAFLSFLVWVHHFFTMGNGALINSFFSISTMLIGIPTGVKLFNWLLTLYKGRITFESPMLFSLAFIPNFLLGGVTGVMLAMASADYQYHNTYFLVAHFHYTLVTGVVFACLAGLIFWYPKMMGYKLNETLNKWCFWFFMIGFNVCFLPQFILGLDGMPRRLYTYMPSDGWFLLNLISTIGALLMAIGFLFLVVSIVYSHFKSPREATGDNWDGLGRTLEWTTASAIPPKYNFAITPDWNGYDTFVDMKEHGRHYLDNHNYKDIHMPNNTPVGFWIGIFMTIGGFFLIFETVIPALICLFGIFGTMIYRSFQIDHGYHIPAAEVAETEARLREARIKEREAVSHES.

2 consecutive transmembrane segments (helical) span residues 14 to 34 and 58 to 78; these read WMITMAQIGAPFLVIGLIAVI and IMYLICAVLMFVRGGIDALLI. His-102 provides a ligand contact to Fe(II)-heme a. Transmembrane regions (helical) follow at residues 103-123, 140-160, 187-207, 228-248, 273-293, 311-331, 336-356, and 376-396; these read GVIMIIFMAMPFIFGLWNIVV, VSFWLFFAGMILFNLSFIIGG, IAIQISGLGTLATGINFFVTI, FITTLIVILAFPPLTVALALM, FFWVWGHPEVYIVILPAFGIY, MVWATAGIAFLSFLVWVHHFF, GALINSFFSISTMLIGIPTGV, and MLFSLAFIPNFLLGGVTGVML. The Cu cation site is built by His-279, Tyr-283, His-328, and His-329. A cross-link (1'-histidyl-3'-tyrosine (His-Tyr)) is located at residues 279 to 283; it reads HPEVY. His-414 lines the heme a3 pocket. Helical transmembrane passes span 415 to 435, 451 to 471, 493 to 513, 587 to 604, and 608 to 627; these read FHYTLVTGVVFACLAGLIFWY, CFWFFMIGFNVCFLPQFILGL, ISTIGALLMAIGFLFLVVSIV, PVGFWIGIFMTIGGFFLI, and VIPALICLFGIFGTMIYRSF. His-416 is a Fe(II)-heme a binding site.

Belongs to the heme-copper respiratory oxidase family. The cofactor is Cu cation. Requires ferriheme a as cofactor. Heme A3. serves as cofactor.

Its subcellular location is the cell membrane. The catalysed reaction is 2 a quinol + O2 = 2 a quinone + 2 H2O. The protein operates within energy metabolism; oxidative phosphorylation. Catalyzes quinol oxidation with the concomitant reduction of oxygen to water. In Staphylococcus aureus (strain MRSA252), this protein is Probable quinol oxidase subunit 1 (qoxB).